A 264-amino-acid polypeptide reads, in one-letter code: Tritrans,polycis-undecaprenyl-diphosphate synthase (geranylgeranyl-diphosphate specific) (264 aa).

Asp-43 is an active-site residue. Asp-43 provides a ligand contact to Mg(2+). Residues 44–47 (GNRR), Trp-48, His-60, and 88–90 (STE) each bind substrate. Asn-91 serves as the catalytic Proton acceptor. Residues Phe-92, Arg-94, Arg-213, and 219 to 221 (RIS) contribute to the substrate site. Glu-232 is a binding site for Mg(2+).

Belongs to the UPP synthase family. In terms of assembly, homodimer. Requires Mg(2+) as cofactor.

It carries out the reaction geranylgeranyl diphosphate + 7 isopentenyl diphosphate = tri-trans,hepta-cis-undecaprenyl diphosphate + 7 diphosphate. Catalyzes the sequential condensation of isopentenyl diphosphate (IPP) with geranylgeranyl diphosphate (GGPP) to yield (2Z,6Z,10Z,14Z,18Z,22Z,26Z,30E,34E,38E)-undecaprenyl diphosphate (tritrans,heptacis-UPP). It is probably the precursor of glycosyl carrier lipids. The chain is Tritrans,polycis-undecaprenyl-diphosphate synthase (geranylgeranyl-diphosphate specific) from Pyrococcus abyssi (strain GE5 / Orsay).